The chain runs to 104 residues: Large ribosomal subunit protein uL24 (104 aa).

The protein belongs to the universal ribosomal protein uL24 family. As to quaternary structure, part of the 50S ribosomal subunit.

Its function is as follows. One of two assembly initiator proteins, it binds directly to the 5'-end of the 23S rRNA, where it nucleates assembly of the 50S subunit. Functionally, one of the proteins that surrounds the polypeptide exit tunnel on the outside of the subunit. The sequence is that of Large ribosomal subunit protein uL24 from Buchnera aphidicola subsp. Schizaphis graminum (strain Sg).